A 265-amino-acid polypeptide reads, in one-letter code: Undecaprenyl-diphosphatase (265 aa).

8 helical membrane-spanning segments follow: residues 1–21, 40–60, 87–107, 113–133, 151–173, 188–208, 214–234, and 244–264; these read MDWL…FLPI, GLAF…LAFH, WAVI…ENVI, ASLV…WADV, IIGF…TITA, SFLL…VELI, VAWG…WLCI, and IGML…LVWV.

The protein belongs to the UppP family.

The protein resides in the cell inner membrane. It carries out the reaction di-trans,octa-cis-undecaprenyl diphosphate + H2O = di-trans,octa-cis-undecaprenyl phosphate + phosphate + H(+). Catalyzes the dephosphorylation of undecaprenyl diphosphate (UPP). Confers resistance to bacitracin. This chain is Undecaprenyl-diphosphatase, found in Chromohalobacter salexigens (strain ATCC BAA-138 / DSM 3043 / CIP 106854 / NCIMB 13768 / 1H11).